Here is a 335-residue protein sequence, read N- to C-terminus: Dolichyl-diphosphooligosaccharide--protein glycosyltransferase subunit MAGT1 (335 aa).

Residues 1 to 29 (MASPRWLWCVCATAAVTLLLVSKVPSASA) form the signal peptide. The Extracellular portion of the chain corresponds to 30–184 (QRKKEKVLVE…DVNIRVIRPP (155 aa)). Positions 47–175 (WTNQRPVIRM…IARWIADRTD (129 aa)) constitute a Thioredoxin domain. N-linked (GlcNAc...) asparagine glycosylation occurs at N71. C87 and C90 are disulfide-bonded. A helical transmembrane segment spans residues 185-205 (NYAGPLMLGLLLAVIGGLVYL). The Cytoplasmic portion of the chain corresponds to 206–209 (RRSN). A helical transmembrane segment spans residues 210–230 (MEFLFNKTGWAFAALCFVLAM). Residues 231–270 (TSGQMWNHIRGPPYAHKNPHTGHVNYIHGSSQAQFVAETH) are Extracellular-facing. The helical transmembrane segment at 271–291 (IVLLFNGGVTLGMVLLCEAAA) threads the bilayer. Residues 292 to 300 (SDMDIGKRR) lie on the Cytoplasmic side of the membrane. A helical transmembrane segment spans residues 301–321 (MMCIAGIGLVVLFFSWMLSIF). Topologically, residues 322-335 (RSKYHGYPYSFLMS) are extracellular.

It belongs to the OST3/OST6 family. In terms of assembly, accessory component of the STT3B-containing form of the oligosaccharyltransferase (OST) complex. OST exists in two different complex forms which contain common core subunits RPN1, RPN2, OST48, OST4, DAD1 and TMEM258, either STT3A or STT3B as catalytic subunits, and form-specific accessory subunits. OST can form stable complexes with the Sec61 complex or with both the Sec61 and TRAP complexes. The association of TUSC3 or MAGT1 with the STT3B-containing complex seems to be mutually exclusvice.

It localises to the cell membrane. The protein resides in the endoplasmic reticulum. Its subcellular location is the endoplasmic reticulum membrane. Its pathway is protein modification; protein glycosylation. Its function is as follows. Accessory component of the STT3B-containing form of the N-oligosaccharyl transferase (OST) complex which catalyzes the transfer of a high mannose oligosaccharide from a lipid-linked oligosaccharide donor to an asparagine residue within an Asn-X-Ser/Thr consensus motif in nascent polypeptide chains. Involved in N-glycosylation of STT3B-dependent substrates. Specifically required for the glycosylation of a subset of acceptor sites that are near cysteine residues; in this function seems to act redundantly with TUSC3. In its oxidized form proposed to form transient mixed disulfides with a glycoprotein substrate to facilitate access of STT3B to the unmodified acceptor site. Also has oxidoreductase-independent functions in the STT3B-containing OST complex possibly involving substrate recognition. Could indirectly play a role in Mg(2+) transport in epithelial cells. The protein is Dolichyl-diphosphooligosaccharide--protein glycosyltransferase subunit MAGT1 of Rattus norvegicus (Rat).